We begin with the raw amino-acid sequence, 517 residues long: Lysophosphatidylcholine acyltransferase 2B (517 aa).

Asparagine 29 carries an N-linked (GlcNAc...) asparagine glycan. 3 consecutive transmembrane segments (helical) span residues 70-90, 103-123, and 137-157; these read IVFL…NLPI, LIKP…GFLI, and IFVV…VAGL. Residues 143 to 148 carry the HXXXXD motif motif; the sequence is HSTFFD. EF-hand domains are found at residues 388 to 423 and 425 to 460; these read PISE…LCNP and NTEK…AFGV. The Ca(2+) site is built by aspartate 401, asparagine 403, aspartate 405, threonine 407, glutamate 412, aspartate 438, aspartate 440, aspartate 442, tyrosine 444, and glutamate 449.

The protein belongs to the 1-acyl-sn-glycerol-3-phosphate acyltransferase family.

It is found in the membrane. Its pathway is lipid metabolism; phospholipid metabolism. Functionally, probable acetyltransferase. In Rattus norvegicus (Rat), this protein is Lysophosphatidylcholine acyltransferase 2B (Lpcat2b).